A 467-amino-acid polypeptide reads, in one-letter code: UDP-N-acetylmuramate--L-alanine ligase (467 aa).

114-120 (GTHGKTT) is a binding site for ATP.

This sequence belongs to the MurCDEF family.

The protein resides in the cytoplasm. It catalyses the reaction UDP-N-acetyl-alpha-D-muramate + L-alanine + ATP = UDP-N-acetyl-alpha-D-muramoyl-L-alanine + ADP + phosphate + H(+). It functions in the pathway cell wall biogenesis; peptidoglycan biosynthesis. In terms of biological role, cell wall formation. This Rhodopseudomonas palustris (strain ATCC BAA-98 / CGA009) protein is UDP-N-acetylmuramate--L-alanine ligase.